The sequence spans 435 residues: MFIDRAKIYVKAGDGGNGCVAFRREKFVPRGGPAGGDGGKGGDVIIEADENLDTLLDFHYKRHYYAERGEHGKGKNQKGKDGEDLIIKVPTGTLIFDAETGELIADLVSHGQRVVVARGGKGGRGNTHFATSTRQAPYFAEKGEKGEERWLYLELKLLADVGLVGLPNAGKSTLLSKISNANPEIAPYPFTTKTPNLGVVEREDITFTVADIPGLIEGAHENKGMGDEFLRHIERTLVLVFVIDAADLVTPPQKAYEILKKELYLYSPKLLEKPRIIAINKIDLPEAQERLPEIEKWLKNEGVPYVFISAKEGINIDKLLELMEKYVRERKESIPVVEVDKEIQETKEGRVETEEIPEVIREKDLWILKDKKTESLANKLDLYNPQAFSYFSNYIKRRGIIKLINRAKVKDGEKIKIGDYIFKYNAKTNSLEILE.

The Obg domain occupies 1-158 (MFIDRAKIYV…RWLYLELKLL (158 aa)). The 170-residue stretch at 159 to 328 (ADVGLVGLPN…LLELMEKYVR (170 aa)) folds into the OBG-type G domain. Residues 165 to 172 (GLPNAGKS), 190 to 194 (FTTKT), 211 to 214 (DIPG), 280 to 283 (NKID), and 309 to 311 (SAK) contribute to the GTP site. Mg(2+)-binding residues include serine 172 and threonine 192. The region spanning 343–426 (IQETKEGRVE…IGDYIFKYNA (84 aa)) is the OCT domain.

Belongs to the TRAFAC class OBG-HflX-like GTPase superfamily. OBG GTPase family. As to quaternary structure, monomer. Mg(2+) is required as a cofactor.

The protein resides in the cytoplasm. Functionally, an essential GTPase which binds GTP, GDP and possibly (p)ppGpp with moderate affinity, with high nucleotide exchange rates and a fairly low GTP hydrolysis rate. Plays a role in control of the cell cycle, stress response, ribosome biogenesis and in those bacteria that undergo differentiation, in morphogenesis control. This chain is GTPase Obg, found in Dictyoglomus thermophilum (strain ATCC 35947 / DSM 3960 / H-6-12).